A 448-amino-acid chain; its full sequence is Glutamyl-tRNA reductase (448 aa).

Residues 48–51 (TCNR), Ser100, 105–107 (EDQ), and Gln111 each bind substrate. The active-site Nucleophile is Cys49. 180 to 185 (GAGEIG) lines the NADP(+) pocket.

The protein belongs to the glutamyl-tRNA reductase family. As to quaternary structure, homodimer.

It catalyses the reaction (S)-4-amino-5-oxopentanoate + tRNA(Glu) + NADP(+) = L-glutamyl-tRNA(Glu) + NADPH + H(+). Its pathway is porphyrin-containing compound metabolism; protoporphyrin-IX biosynthesis; 5-aminolevulinate from L-glutamyl-tRNA(Glu): step 1/2. Catalyzes the NADPH-dependent reduction of glutamyl-tRNA(Glu) to glutamate 1-semialdehyde (GSA). This chain is Glutamyl-tRNA reductase, found in Methanosarcina mazei (strain ATCC BAA-159 / DSM 3647 / Goe1 / Go1 / JCM 11833 / OCM 88) (Methanosarcina frisia).